Consider the following 553-residue polypeptide: CTP synthase (553 aa).

An amidoligase domain region spans residues 1–277 (MPTEPETDYD…DQYVMEELDI (277 aa)). CTP is bound at residue Ser-26. Residue Ser-26 participates in UTP binding. ATP is bound by residues 27–32 (GLGKGI) and Asp-84. Positions 84 and 152 each coordinate Mg(2+). CTP-binding positions include 159-161 (DIE), 198-203 (KTKPTQ), and Lys-234. Residues 198 to 203 (KTKPTQ) and Lys-234 each bind UTP. The region spanning 307 to 544 (LVGKYDLEDA…LEAVLGDDPH (238 aa)) is the Glutamine amidotransferase type-1 domain. Gly-364 serves as a coordination point for L-glutamine. Cys-391 serves as the catalytic Nucleophile; for glutamine hydrolysis. L-glutamine is bound by residues 392-395 (LGFQ), Glu-415, and Arg-472. Catalysis depends on residues His-517 and Glu-519.

The protein belongs to the CTP synthase family. In terms of assembly, homotetramer.

It carries out the reaction UTP + L-glutamine + ATP + H2O = CTP + L-glutamate + ADP + phosphate + 2 H(+). The catalysed reaction is L-glutamine + H2O = L-glutamate + NH4(+). The enzyme catalyses UTP + NH4(+) + ATP = CTP + ADP + phosphate + 2 H(+). It participates in pyrimidine metabolism; CTP biosynthesis via de novo pathway; CTP from UDP: step 2/2. Its activity is regulated as follows. Allosterically activated by GTP, when glutamine is the substrate; GTP has no effect on the reaction when ammonia is the substrate. The allosteric effector GTP functions by stabilizing the protein conformation that binds the tetrahedral intermediate(s) formed during glutamine hydrolysis. Inhibited by the product CTP, via allosteric rather than competitive inhibition. Its function is as follows. Catalyzes the ATP-dependent amination of UTP to CTP with either L-glutamine or ammonia as the source of nitrogen. Regulates intracellular CTP levels through interactions with the four ribonucleotide triphosphates. This Haloarcula marismortui (strain ATCC 43049 / DSM 3752 / JCM 8966 / VKM B-1809) (Halobacterium marismortui) protein is CTP synthase.